A 78-amino-acid polypeptide reads, in one-letter code: Large ribosomal subunit protein bL28 (78 aa).

Positions 1-20 are disordered; sequence MSRVCQVTGKRPAVGNNRSH.

The protein belongs to the bacterial ribosomal protein bL28 family.

This chain is Large ribosomal subunit protein bL28, found in Actinobacillus pleuropneumoniae serotype 7 (strain AP76).